A 489-amino-acid polypeptide reads, in one-letter code: MDIPLSSDALDLCFHPAAETNLLAVGLISGKIQLINYDDYLSSPSSSRTPLAPPSKKSKPSTISSAVETPTKLYRKLYTSRPSKKSCRGLHFSTTGSSIFSISKDKSLFSTDTQTGKVVQSWIEVHDAAPSRVLPVDESLVVTGDDDGVVRLWDVRKGGGKGIKPVRMWEHHFDWITDMVYLADLPVPKPKSIKEAKKSKTQLKKQRRRARQAERLKEHDKEKREQNASDTEASEPDSEDDAAIKVESRSRLIVTSGDGSLSSIDLLSSGPTSFEQSEDQEDELLSITSIRSSTKLVVGTQLGILSLWTPSRGLLDHVDRVPGHPASVDTLVTLDNETVLTGSSDGLVRVVQILPSKLLGVIASHNGLPVERMKRKQSVLASIGHTNAVKLTDLSPLLDDNDDQGDDDDEQAGALGIVGLAEDDSDDDDDDDDDDDDDDDEKHLVVELDGAEQTDGDAESGQDDEQDPDSEDVTPSQNKAGKGGFFSDL.

The WD 1 repeat unit spans residues 4-45 (PLSSDALDLCFHPAAETNLLAVGLISGKIQLINYDDYLSSPS). Residues 46-66 (SSRTPLAPPSKKSKPSTISSA) form a disordered region. A WD 2 repeat occupies 124-163 (EVHDAAPSRVLPVDESLVVTGDDDGVVRLWDVRKGGGKGI). The disordered stretch occupies residues 192-246 (SIKEAKKSKTQLKKQRRRARQAERLKEHDKEKREQNASDTEASEPDSEDDAAIKV). The span at 199 to 210 (SKTQLKKQRRRA) shows a compositional bias: basic residues. Basic and acidic residues predominate over residues 211-227 (RQAERLKEHDKEKREQN). The span at 232–241 (EASEPDSEDD) shows a compositional bias: acidic residues. WD repeat units lie at residues 279 to 318 (DQED…LDHV) and 323 to 363 (GHPA…GVIA). The segment at 417 to 489 (IVGLAEDDSD…AGKGGFFSDL (73 aa)) is disordered. 2 stretches are compositionally biased toward acidic residues: residues 421–440 (AEDD…DDDD) and 449–472 (DGAE…DSED).

The protein belongs to the WD repeat WDR55 family.

It localises to the nucleus. The protein localises to the nucleolus. The polypeptide is WD repeat-containing protein JIP5 (JIP5) (Mycosarcoma maydis (Corn smut fungus)).